The chain runs to 1016 residues: S-layer protein A (1016 aa).

A signal peptide spans 1–30 (MDLSTKKVISAGLVFIYALSLAMLVPMFLA).

It belongs to the Sulfolobales SlaA family. The mushroom-shaped unit cells of the Sulfolobales' S-layers may consist of three SlaB subunits and six SlaA subunits.

The protein resides in the secreted. It localises to the cell wall. The protein localises to the S-layer. In terms of biological role, S-layer large protein. May form the highly ordered outer sheath. The protein is S-layer protein A of Acidianus ambivalens (Desulfurolobus ambivalens).